The sequence spans 95 residues: SCYDLCQPCGPTPLANSCNEPCVRQCQDSRVVIQPSPVVVTLPGPILSSFPQNTAVGSTSAAVGSILSEQGVPISSGGFSLSGLGGRSYSRYLPC.

N-acetylserine is present on serine 1.

The protein belongs to the avian keratin family. As to quaternary structure, the avian keratins (F-ker, S-ker, C-ker and B-ker) are a complex mixture of very similar polypeptides.

The chain is Feather keratin B-4 from Columba livia (Rock dove).